We begin with the raw amino-acid sequence, 306 residues long: MATCEEVPEALKGQLDVARGLENLPVSAWPPGAEPEPFQYTPDHVAGPGADADPSQITFPGCACLKTPCLPGTCSCLRHENNYDDRSCLRDIGSEAKCTEPVFECNVLCQCSERCRNRVVQWGLQFHLQVFKTDHKGWGLRTLDFIPKGRFVCEYAGEVLGISEVQRRVQLQTIHDSNYIIAIREHVYNGQVMETFVDPASIGNIGRFLNHSCEPNLLMIPVRIDSMVPKLALFAARDILPEEELSYDYSGRFLNLMHSEDKERLDNGKLRKPCYCGARSCAAFLPYDSSLYCPTEKPDTSEEGRA.

The 64-residue stretch at 60–123 (PGCACLKTPC…RCRNRVVQWG (64 aa)) folds into the Pre-SET domain. Zn(2+) is bound by residues cysteine 62, cysteine 64, cysteine 69, cysteine 74, cysteine 76, cysteine 105, cysteine 109, cysteine 111, and cysteine 115. Residues 126-250 (FHLQVFKTDH…PEEELSYDYS (125 aa)) form the SET domain. Residues 136–138 (KGW), tyrosine 179, arginine 207, and 210–211 (NH) each bind S-adenosyl-L-methionine. Zn(2+) is bound by residues cysteine 213, cysteine 274, cysteine 276, and cysteine 281. The Post-SET domain maps to 270–286 (LRKPCYCGARSCAAFLP).

This sequence belongs to the class V-like SAM-binding methyltransferase superfamily.

It localises to the nucleus. Its subcellular location is the chromosome. The catalysed reaction is L-lysyl(36)-[histone H3] + 2 S-adenosyl-L-methionine = N(6),N(6)-dimethyl-L-lysyl(36)-[histone H3] + 2 S-adenosyl-L-homocysteine + 2 H(+). Histone methyltransferase that methylates 'Lys-4' and 'Lys-36' of histone H3, 2 specific tags for epigenetic transcriptional activation. Specifically mediates dimethylation of H3 'Lys-36'. The chain is Histone-lysine N-methyltransferase SETMAR from Bos taurus (Bovine).